The chain runs to 85 residues: Beta-insect depressant toxin Lqh-dprIT3c (85 aa).

The N-terminal stretch at 1–21 is a signal peptide; sequence MKLLLLLTISASMLIEGLVNA. The 61-residue stretch at 22-82 folds into the LCN-type CS-alpha/beta domain; it reads DGYIRGGDGC…EWDYETNTCG (61 aa). Disulfide bonds link Cys31-Cys81, Cys35-Cys56, Cys42-Cys63, and Cys46-Cys65. Position 82 is a glycine amide (Gly82).

The protein belongs to the long (4 C-C) scorpion toxin superfamily. Sodium channel inhibitor family. Beta subfamily. As to expression, expressed by the venom gland.

The protein resides in the secreted. In terms of biological role, depressant insect beta-toxins cause a transient contraction paralysis followed by a slow flaccid paralysis. They bind voltage-independently at site-4 of sodium channels (Nav) and block action potentials, primarily by depolarizing the axonal membrane and suppressing the sodium current. This depressant toxin is active only on insects. It is found in a relatively small amount in the venom, and its activity on insects is 10-fold higher compared to other known depressant toxins. The polypeptide is Beta-insect depressant toxin Lqh-dprIT3c (Leiurus hebraeus (Hebrew deathstalker scorpion)).